A 399-amino-acid chain; its full sequence is Succinyl-diaminopimelate desuccinylase (399 aa).

Zn(2+) is bound at residue H80. Residue D82 is part of the active site. D113 is a Zn(2+) binding site. The Proton acceptor role is filled by E147. Zn(2+)-binding residues include E148, E176, and H366.

This sequence belongs to the peptidase M20A family. DapE subfamily. In terms of assembly, homodimer. Zn(2+) is required as a cofactor. It depends on Co(2+) as a cofactor.

The enzyme catalyses N-succinyl-(2S,6S)-2,6-diaminopimelate + H2O = (2S,6S)-2,6-diaminopimelate + succinate. It functions in the pathway amino-acid biosynthesis; L-lysine biosynthesis via DAP pathway; LL-2,6-diaminopimelate from (S)-tetrahydrodipicolinate (succinylase route): step 3/3. Functionally, catalyzes the hydrolysis of N-succinyl-L,L-diaminopimelic acid (SDAP), forming succinate and LL-2,6-diaminopimelate (DAP), an intermediate involved in the bacterial biosynthesis of lysine and meso-diaminopimelic acid, an essential component of bacterial cell walls. The protein is Succinyl-diaminopimelate desuccinylase of Colwellia psychrerythraea (strain 34H / ATCC BAA-681) (Vibrio psychroerythus).